The following is a 274-amino-acid chain: Large ribosomal subunit protein uL2 (274 aa).

Disordered stretches follow at residues 36–61 (QKSKTGGRNSNGRITTRHRGGGHKQR) and 223–274 (VAMN…RRKR). The segment covering 37–46 (KSKTGGRNSN) has biased composition (polar residues). Composition is skewed to basic residues over residues 50–61 (TTRHRGGGHKQR) and 254–274 (KGHKTRKNKRTDKYIVRRRKR).

This sequence belongs to the universal ribosomal protein uL2 family. In terms of assembly, part of the 50S ribosomal subunit. Forms a bridge to the 30S subunit in the 70S ribosome.

One of the primary rRNA binding proteins. Required for association of the 30S and 50S subunits to form the 70S ribosome, for tRNA binding and peptide bond formation. It has been suggested to have peptidyltransferase activity; this is somewhat controversial. Makes several contacts with the 16S rRNA in the 70S ribosome. The protein is Large ribosomal subunit protein uL2 of Halorhodospira halophila (strain DSM 244 / SL1) (Ectothiorhodospira halophila (strain DSM 244 / SL1)).